The chain runs to 445 residues: Ribosomal protein uS12 methylthiotransferase RimO (445 aa).

Residues 11–121 (PKISFVSLGC…VLDAVHRASP (111 aa)) form the MTTase N-terminal domain. The [4Fe-4S] cluster site is built by C20, C56, C85, C152, C156, and C159. The region spanning 138–375 (LTPRHYAYLK…MARQQKISAR (238 aa)) is the Radical SAM core domain. The TRAM domain maps to 378 to 444 (KRKVGTRQQI…EYDLHGTVAG (67 aa)).

It belongs to the methylthiotransferase family. RimO subfamily. It depends on [4Fe-4S] cluster as a cofactor.

It localises to the cytoplasm. The enzyme catalyses L-aspartate(89)-[ribosomal protein uS12]-hydrogen + (sulfur carrier)-SH + AH2 + 2 S-adenosyl-L-methionine = 3-methylsulfanyl-L-aspartate(89)-[ribosomal protein uS12]-hydrogen + (sulfur carrier)-H + 5'-deoxyadenosine + L-methionine + A + S-adenosyl-L-homocysteine + 2 H(+). Catalyzes the methylthiolation of an aspartic acid residue of ribosomal protein uS12. The protein is Ribosomal protein uS12 methylthiotransferase RimO of Bradyrhizobium sp. (strain ORS 278).